A 204-amino-acid polypeptide reads, in one-letter code: Large ribosomal subunit protein uL4 (204 aa).

The tract at residues 48-75 is disordered; it reads HTKGRSDVSGGGKKPWRQKGRGGARAGS.

Belongs to the universal ribosomal protein uL4 family. Part of the 50S ribosomal subunit.

Its function is as follows. One of the primary rRNA binding proteins, this protein initially binds near the 5'-end of the 23S rRNA. It is important during the early stages of 50S assembly. It makes multiple contacts with different domains of the 23S rRNA in the assembled 50S subunit and ribosome. Forms part of the polypeptide exit tunnel. The protein is Large ribosomal subunit protein uL4 of Campylobacter fetus subsp. fetus (strain 82-40).